The following is a 327-amino-acid chain: Flotillin-like protein FloA (327 aa).

The chain crosses the membrane as a helical span at residues 2–22 (IGLIIIVVIVLVALLLLFSFV). Positions 305 to 327 (ADTGMRNSINQRTNQKDDESPDK) are disordered. A compositionally biased stretch (basic and acidic residues) spans 318–327 (NQKDDESPDK).

This sequence belongs to the flotillin-like FloA family. As to quaternary structure, homooligomerizes.

The protein resides in the cell membrane. Its subcellular location is the membrane raft. Its function is as follows. Found in functional membrane microdomains (FMM) that may be equivalent to eukaryotic membrane rafts. FMMs are highly dynamic and increase in number as cells age. Flotillins are thought to be important factors in membrane fluidity. In Staphylococcus saprophyticus subsp. saprophyticus (strain ATCC 15305 / DSM 20229 / NCIMB 8711 / NCTC 7292 / S-41), this protein is Flotillin-like protein FloA.